Here is a 194-residue protein sequence, read N- to C-terminus: Large ribosomal subunit protein bL12m (194 aa).

The N-terminal 33 residues, 1–33 (MSLRILAKRSSSIWMKTRVTPALISPITITTRF), are a transit peptide targeting the mitochondrion. Residue Asn34 is glycosylated (N-linked (GlcNAc...) asparagine). The disordered stretch occupies residues 101-120 (AGNVPSSTGEAGSGAEEEAK). Residues 105-114 (PSSTGEAGSG) show a composition bias toward low complexity.

It belongs to the bacterial ribosomal protein bL12 family. As to quaternary structure, component of the mitochondrial large ribosomal subunit (mt-LSU). Mature yeast 74S mitochondrial ribosomes consist of a small (37S) and a large (54S) subunit. The 37S small subunit contains a 15S ribosomal RNA (15S mt-rRNA) and 34 different proteins. The 54S large subunit contains a 21S rRNA (21S mt-rRNA) and 46 different proteins. In terms of processing, N-glycosylated.

It is found in the mitochondrion. Component of the mitochondrial ribosome (mitoribosome), a dedicated translation machinery responsible for the synthesis of mitochondrial genome-encoded proteins, including at least some of the essential transmembrane subunits of the mitochondrial respiratory chain. The mitoribosomes are attached to the mitochondrial inner membrane and translation products are cotranslationally integrated into the membrane. The polypeptide is Large ribosomal subunit protein bL12m (MNP1) (Saccharomyces cerevisiae (strain ATCC 204508 / S288c) (Baker's yeast)).